A 144-amino-acid polypeptide reads, in one-letter code: Nucleoside diphosphate kinase (144 aa).

ATP contacts are provided by Lys-9, Phe-57, Arg-85, Thr-91, Arg-102, and Asn-112. His-115 serves as the catalytic Pros-phosphohistidine intermediate.

Belongs to the NDK family. In terms of assembly, homotetramer. The cofactor is Mg(2+).

The protein localises to the cytoplasm. It carries out the reaction a 2'-deoxyribonucleoside 5'-diphosphate + ATP = a 2'-deoxyribonucleoside 5'-triphosphate + ADP. It catalyses the reaction a ribonucleoside 5'-diphosphate + ATP = a ribonucleoside 5'-triphosphate + ADP. Major role in the synthesis of nucleoside triphosphates other than ATP. The ATP gamma phosphate is transferred to the NDP beta phosphate via a ping-pong mechanism, using a phosphorylated active-site intermediate. The protein is Nucleoside diphosphate kinase of Chlamydia pneumoniae (Chlamydophila pneumoniae).